A 318-amino-acid chain; its full sequence is Methionyl-tRNA formyltransferase (318 aa).

112–115 (SILP) is a (6S)-5,6,7,8-tetrahydrofolate binding site.

It belongs to the Fmt family.

The catalysed reaction is L-methionyl-tRNA(fMet) + (6R)-10-formyltetrahydrofolate = N-formyl-L-methionyl-tRNA(fMet) + (6S)-5,6,7,8-tetrahydrofolate + H(+). Attaches a formyl group to the free amino group of methionyl-tRNA(fMet). The formyl group appears to play a dual role in the initiator identity of N-formylmethionyl-tRNA by promoting its recognition by IF2 and preventing the misappropriation of this tRNA by the elongation apparatus. The protein is Methionyl-tRNA formyltransferase of Haemophilus influenzae (strain PittGG).